Reading from the N-terminus, the 316-residue chain is Lys-63-specific deubiquitinase BRCC36 (316 aa).

Ala-2 carries the N-acetylalanine modification. Positions 12–179 (VHLESDAFLV…YTCFQSIQAQ (168 aa)) constitute an MPN domain. His-122, His-124, and Asp-135 together coordinate Zn(2+). Positions 122–135 (HSHPHITVWPSHVD) match the JAMM motif motif. Ser-258 is modified (phosphoserine).

This sequence belongs to the peptidase M67A family. BRCC36 subfamily. As to quaternary structure, component of the ARISC complex, at least composed of UIMC1/RAP80, ABRAXAS1, BRCC3/BRCC36, BABAM2 and BABAM1/NBA1. Component of the BRCA1-A complex, at least composed of BRCA1, BARD1, UIMC1/RAP80, ABRAXAS1, BRCC3/BRCC36, BABAM2 and BABAM1/NBA1. In the BRCA1-A complex, interacts directly with ABRAXAS1 and BABAM2. Component of the BRISC complex, at least composed of ABRAXAS2, BRCC3/BRCC36, BABAM2 and BABAM1/NBA1. Identified in a complex with SHMT2 and the other subunits of the BRISC complex. In the BRISC complex, interacts directly with ABRAXAS2. Identified in a complex with ABRAXAS2 and NUMA1. The BRISC complex interacts with the CSN complex. Component of the BRCA1/BRCA2 containing complex (BRCC), which also contains BRCA1, BRCA2, BARD1, BABAM2 and RAD51. BRCC is a ubiquitin E3 ligase complex that enhances cellular survival following DNA damage. Interacts with BRCA1. Binds polyubiquitin. Interacts with PWWP2B. Interacts with HDAC1; this interaction is enhanced in the presence of PWWP2B. Zn(2+) serves as cofactor.

The protein resides in the nucleus. It localises to the cytoplasm. It is found in the cytoskeleton. The protein localises to the spindle pole. Its function is as follows. Metalloprotease that specifically cleaves 'Lys-63'-linked polyubiquitin chains. Does not have activity toward 'Lys-48'-linked polyubiquitin chains. Component of the BRCA1-A complex, a complex that specifically recognizes 'Lys-63'-linked ubiquitinated histones H2A and H2AX at DNA lesions sites, leading to target the BRCA1-BARD1 heterodimer to sites of DNA damage at double-strand breaks (DSBs). In the BRCA1-A complex, it specifically removes 'Lys-63'-linked ubiquitin on histones H2A and H2AX, antagonizing the RNF8-dependent ubiquitination at double-strand breaks (DSBs). Catalytic subunit of the BRISC complex, a multiprotein complex that specifically cleaves 'Lys-63'-linked ubiquitin in various substrates. Mediates the specific 'Lys-63'-specific deubiquitination associated with the COP9 signalosome complex (CSN), via the interaction of the BRISC complex with the CSN complex. The BRISC complex is required for normal mitotic spindle assembly and microtubule attachment to kinetochores via its role in deubiquitinating NUMA1. Plays a role in interferon signaling via its role in the deubiquitination of the interferon receptor IFNAR1; deubiquitination increases IFNAR1 activity by enhancing its stability and cell surface expression. Acts as a regulator of the NLRP3 inflammasome by mediating deubiquitination of NLRP3, leading to NLRP3 inflammasome assembly. Down-regulates the response to bacterial lipopolysaccharide (LPS) via its role in IFNAR1 deubiquitination. Deubiquitinates HDAC1 and PWWP2B leading to their stabilization. The polypeptide is Lys-63-specific deubiquitinase BRCC36 (BRCC3) (Bos taurus (Bovine)).